We begin with the raw amino-acid sequence, 235 residues long: Phosphoglycolate phosphatase (235 aa).

Asp14 functions as the Nucleophile in the catalytic mechanism. Residues Asp14, Asp16, and Asp177 each contribute to the Mg(2+) site.

Belongs to the HAD-like hydrolase superfamily. CbbY/CbbZ/Gph/YieH family. Mg(2+) is required as a cofactor.

It catalyses the reaction 2-phosphoglycolate + H2O = glycolate + phosphate. Its pathway is organic acid metabolism; glycolate biosynthesis; glycolate from 2-phosphoglycolate: step 1/1. In terms of biological role, specifically catalyzes the dephosphorylation of 2-phosphoglycolate. Is involved in the dissimilation of the intracellular 2-phosphoglycolate formed during the DNA repair of 3'-phosphoglycolate ends, a major class of DNA lesions induced by oxidative stress. The polypeptide is Phosphoglycolate phosphatase (Neisseria meningitidis serogroup A / serotype 4A (strain DSM 15465 / Z2491)).